The primary structure comprises 461 residues: D-phenylhydantoinase (461 aa).

Histidine 59, histidine 61, and lysine 151 together coordinate a divalent metal cation. An N6-carboxylysine modification is found at lysine 151. Position 156 (tyrosine 156) interacts with substrate. Histidine 182 and histidine 239 together coordinate a divalent metal cation. Position 286 (serine 286) interacts with substrate. Aspartate 313 lines the a divalent metal cation pocket. Asparagine 335 is a binding site for substrate.

Belongs to the metallo-dependent hydrolases superfamily. Hydantoinase/dihydropyrimidinase family. As to quaternary structure, homotetramer. It depends on a divalent metal cation as a cofactor. Post-translationally, carboxylation allows a single lysine to coordinate two divalent metal cations.

It catalyses the reaction D-5-phenylhydantoin + H2O = N-carbamoyl-D-phenylglycine + H(+). Functionally, catalyzes the stereospecific hydrolysis of the cyclic amide bond of D-hydantoin derivatives with an aromatic side chains at the 5'-position. Has no activity on dihydropyrimidines. The physiological function is unknown. The sequence is that of D-phenylhydantoinase from Escherichia coli (strain UTI89 / UPEC).